We begin with the raw amino-acid sequence, 313 residues long: Beta-ketoacyl-[acyl-carrier-protein] synthase III (313 aa).

Residues cysteine 112 and histidine 238 contribute to the active site. The tract at residues 239 to 243 (QANIR) is ACP-binding. Asparagine 268 is a catalytic residue.

Belongs to the thiolase-like superfamily. FabH family. Homodimer.

It localises to the cytoplasm. The catalysed reaction is malonyl-[ACP] + acetyl-CoA + H(+) = 3-oxobutanoyl-[ACP] + CO2 + CoA. It participates in lipid metabolism; fatty acid biosynthesis. Its function is as follows. Catalyzes the condensation reaction of fatty acid synthesis by the addition to an acyl acceptor of two carbons from malonyl-ACP. Catalyzes the first condensation reaction which initiates fatty acid synthesis and may therefore play a role in governing the total rate of fatty acid production. Possesses both acetoacetyl-ACP synthase and acetyl transacylase activities. Its substrate specificity determines the biosynthesis of branched-chain and/or straight-chain of fatty acids. The protein is Beta-ketoacyl-[acyl-carrier-protein] synthase III of Staphylococcus saprophyticus subsp. saprophyticus (strain ATCC 15305 / DSM 20229 / NCIMB 8711 / NCTC 7292 / S-41).